A 1597-amino-acid chain; its full sequence is Transmembrane protein 131-like (1597 aa).

Residues 1-40 (MAGLRRPQSGAYRRTAAAVNLLLGVFQVLLSCCRPGGAQG) form the signal peptide. At 41-869 (QAFEPLPNVV…VVPGPSWEES (829 aa)) the chain is on the extracellular side. N-linked (GlcNAc...) asparagine glycans are attached at residues Asn-343, Asn-593, Asn-709, and Asn-846. The segment at 696-916 (DYGKVTSLIL…QNGSSSSQQN (221 aa)) is required for Wnt-signaling inhibition and LRP6 degradation. The chain crosses the membrane as a helical span at residues 870 to 890 (FWRLTVFFVSLSLLGVILIAF). At 891–1597 (QQAQYILMEF…SRDSSYCGNM (707 aa)) the chain is on the cytoplasmic side. A compositionally biased stretch (low complexity) spans 907 to 917 (QNGSSSSQQNG). 3 disordered regions span residues 907-928 (QNGS…SHPH), 1096-1240 (AELK…EQRL), and 1252-1322 (DGAG…SDCD). Residues 1213–1222 (RPCRRNKKRA) are compositionally biased toward basic residues. The segment covering 1223-1239 (SAQASSSPRPSEQSEQR) has biased composition (low complexity). Over residues 1269-1290 (PERREEDSYYQKSEKKCADKFC) the composition is skewed to basic and acidic residues. The span at 1291-1319 (SDSSSDCGSSSGSVRASRGSWGSWSSSSS) shows a compositional bias: low complexity.

Belongs to the TMEM131 family.

Its subcellular location is the cell membrane. The protein localises to the endoplasmic reticulum. It is found in the cytoplasm. Functionally, in its membrane-associated form, antagonizes canonical Wnt signaling by triggering lysosome-dependent degradation of Wnt-activated LRP6. Regulates thymocyte proliferation. In Mus musculus (Mouse), this protein is Transmembrane protein 131-like.